We begin with the raw amino-acid sequence, 121 residues long: Aspartate 1-decarboxylase (121 aa).

The Schiff-base intermediate with substrate; via pyruvic acid role is filled by serine 25. Serine 25 carries the pyruvic acid (Ser) modification. Threonine 57 contacts substrate. The active-site Proton donor is the tyrosine 58. Residue 73-75 participates in substrate binding; that stretch reads GAA.

It belongs to the PanD family. Heterooctamer of four alpha and four beta subunits. Pyruvate serves as cofactor. Post-translationally, is synthesized initially as an inactive proenzyme, which is activated by self-cleavage at a specific serine bond to produce a beta-subunit with a hydroxyl group at its C-terminus and an alpha-subunit with a pyruvoyl group at its N-terminus.

It localises to the cytoplasm. It carries out the reaction L-aspartate + H(+) = beta-alanine + CO2. It participates in cofactor biosynthesis; (R)-pantothenate biosynthesis; beta-alanine from L-aspartate: step 1/1. Functionally, catalyzes the pyruvoyl-dependent decarboxylation of aspartate to produce beta-alanine. The chain is Aspartate 1-decarboxylase from Maricaulis maris (strain MCS10) (Caulobacter maris).